The following is a 119-amino-acid chain: Large ribosomal subunit protein uL18 (119 aa).

It belongs to the universal ribosomal protein uL18 family. In terms of assembly, part of the 50S ribosomal subunit; part of the 5S rRNA/L5/L18/L25 subcomplex. Contacts the 5S and 23S rRNAs.

Its function is as follows. This is one of the proteins that bind and probably mediate the attachment of the 5S RNA into the large ribosomal subunit, where it forms part of the central protuberance. The chain is Large ribosomal subunit protein uL18 from Borrelia hermsii (strain HS1 / DAH).